The following is a 515-amino-acid chain: Proline--tRNA ligase (515 aa).

It belongs to the class-II aminoacyl-tRNA synthetase family. ProS type 3 subfamily. Homodimer.

It is found in the cytoplasm. It catalyses the reaction tRNA(Pro) + L-proline + ATP = L-prolyl-tRNA(Pro) + AMP + diphosphate. Functionally, catalyzes the attachment of proline to tRNA(Pro) in a two-step reaction: proline is first activated by ATP to form Pro-AMP and then transferred to the acceptor end of tRNA(Pro). This is Proline--tRNA ligase from Novosphingobium aromaticivorans (strain ATCC 700278 / DSM 12444 / CCUG 56034 / CIP 105152 / NBRC 16084 / F199).